The chain runs to 401 residues: Argininosuccinate synthase (401 aa).

8-16 (AYSGGLDTS) lines the ATP pocket. Tyrosine 87 contributes to the L-citrulline binding site. Glycine 117 provides a ligand contact to ATP. Residues threonine 119, asparagine 123, and aspartate 124 each coordinate L-aspartate. Asparagine 123 contributes to the L-citrulline binding site. L-citrulline contacts are provided by arginine 127, serine 175, glutamate 259, and tyrosine 271.

The protein belongs to the argininosuccinate synthase family. Type 1 subfamily. In terms of assembly, homotetramer.

It is found in the cytoplasm. It carries out the reaction L-citrulline + L-aspartate + ATP = 2-(N(omega)-L-arginino)succinate + AMP + diphosphate + H(+). The protein operates within amino-acid biosynthesis; L-arginine biosynthesis; L-arginine from L-ornithine and carbamoyl phosphate: step 2/3. This chain is Argininosuccinate synthase, found in Paenarthrobacter aurescens (strain TC1).